The chain runs to 173 residues: Crossover junction endodeoxyribonuclease RuvC (173 aa).

Residues Asp-8, Glu-67, and Asp-139 contribute to the active site. Mg(2+) contacts are provided by Asp-8, Glu-67, and Asp-139.

This sequence belongs to the RuvC family. Homodimer which binds Holliday junction (HJ) DNA. The HJ becomes 2-fold symmetrical on binding to RuvC with unstacked arms; it has a different conformation from HJ DNA in complex with RuvA. In the full resolvosome a probable DNA-RuvA(4)-RuvB(12)-RuvC(2) complex forms which resolves the HJ. Mg(2+) serves as cofactor.

It is found in the cytoplasm. It carries out the reaction Endonucleolytic cleavage at a junction such as a reciprocal single-stranded crossover between two homologous DNA duplexes (Holliday junction).. Functionally, the RuvA-RuvB-RuvC complex processes Holliday junction (HJ) DNA during genetic recombination and DNA repair. Endonuclease that resolves HJ intermediates. Cleaves cruciform DNA by making single-stranded nicks across the HJ at symmetrical positions within the homologous arms, yielding a 5'-phosphate and a 3'-hydroxyl group; requires a central core of homology in the junction. The consensus cleavage sequence is 5'-(A/T)TT(C/G)-3'. Cleavage occurs on the 3'-side of the TT dinucleotide at the point of strand exchange. HJ branch migration catalyzed by RuvA-RuvB allows RuvC to scan DNA until it finds its consensus sequence, where it cleaves and resolves the cruciform DNA. The sequence is that of Crossover junction endodeoxyribonuclease RuvC from Shewanella sediminis (strain HAW-EB3).